The sequence spans 213 residues: KHG/KDPG aldolase (213 aa).

Glu-45 (proton acceptor) is an active-site residue. Pyruvate-binding residues include Arg-49, Thr-73, and Lys-133. Lys-133 (schiff-base intermediate with substrate) is an active-site residue.

This sequence belongs to the KHG/KDPG aldolase family. Homotrimer.

It is found in the cytoplasm. It catalyses the reaction 2-dehydro-3-deoxy-6-phospho-D-gluconate = D-glyceraldehyde 3-phosphate + pyruvate. The catalysed reaction is (4S)-4-hydroxy-2-oxoglutarate = glyoxylate + pyruvate. Its pathway is carbohydrate acid metabolism; 2-dehydro-3-deoxy-D-gluconate degradation; D-glyceraldehyde 3-phosphate and pyruvate from 2-dehydro-3-deoxy-D-gluconate: step 2/2. The protein operates within carbohydrate metabolism; glyoxylate and dicarboxylate metabolism. Functionally, involved in the degradation of glucose via the Entner-Doudoroff pathway. Catalyzes the reversible, stereospecific retro-aldol cleavage of 2-keto-3-deoxy-6-phosphogluconate (KDPG) to pyruvate and D-glyceraldehyde-3-phosphate. In addition to its KDPG aldolase activity, catalyzes the reversible cleavage of 2-keto-4-hydroxyglutarate (KHG) to glyoxylate and pyruvate. The enzyme is stereoselective for the S-enantiomer of KHG. Cleavage of KHG could serve in tricarboxylic acid (TCA) cycle regulation or, when operating in the reverse direction, in the detoxification of glyoxylate. The chain is KHG/KDPG aldolase (eda) from Escherichia coli O157:H7.